Here is a 309-residue protein sequence, read N- to C-terminus: MSKKIAVIGECMIELSEKGADVKRGFGGDTLNTSVYIARQVDPAALTVHYVTALGTDSFSQQMLDAWHGENVDTSLTQRMENRLPGLYYIETDSTGERTFYYWRNEAAAKFWLESEQSAAICEELANFDYLYLSGISLAILSPTSREKLLSLLRECRANGGKVIFDNNYRPRLWASKEETQQVYQQMLECTDIAFLTLDDEDALWGQQPVEDVIARTHNAGVKEVVVKRGADSCLVSIAGEGLVDVPAVKLPKEKVIDTTAAGDSFSAGYLAVRLTGGSAEDAAKRGHLTASTVIQYRGAIIPREAMPA.

Substrate contacts are provided by residues 28–32 (GDTLN), Tyr88, 102–104 (YWR), and Arg170. Residues 168–170 (NYR), 228–233 (KRGADS), and 261–264 (AAGD) each bind ATP. Asp264 is a binding site for substrate. Residue Asp264 is the Proton acceptor of the active site.

It belongs to the carbohydrate kinase PfkB family.

It carries out the reaction 2-dehydro-3-deoxy-D-gluconate + ATP = 2-dehydro-3-deoxy-6-phospho-D-gluconate + ADP + H(+). The protein operates within carbohydrate acid metabolism; 2-dehydro-3-deoxy-D-gluconate degradation; D-glyceraldehyde 3-phosphate and pyruvate from 2-dehydro-3-deoxy-D-gluconate: step 1/2. Catalyzes the phosphorylation of 2-keto-3-deoxygluconate (KDG) to produce 2-keto-3-deoxy-6-phosphogluconate (KDPG). This Escherichia coli (strain K12) protein is 2-dehydro-3-deoxygluconokinase (kdgK).